The chain runs to 137 residues: Gonadotropin subunit beta-2 (137 aa).

The first 24 residues, 1 to 24 (MLPFMLSSFLGASPSIWPLAPAEA), serve as a signal peptide directing secretion. Intrachain disulfides connect cysteine 30–cysteine 76, cysteine 44–cysteine 91, cysteine 47–cysteine 129, cysteine 55–cysteine 107, cysteine 59–cysteine 109, and cysteine 112–cysteine 119. N-linked (GlcNAc...) asparagine glycosylation occurs at asparagine 34.

The protein belongs to the glycoprotein hormones subunit beta family. In terms of assembly, heterodimer of an alpha and a beta chain.

It localises to the secreted. Involved in gametogenesis and steroidogenesis. In Acanthopagrus latus (Yellowfin seabream), this protein is Gonadotropin subunit beta-2 (cgbb).